A 916-amino-acid chain; its full sequence is METSQETSLFLVKILEELDSKQNTVSYQDLCKSLCARFDLSQLAKLRSVLFYTACLDPNFPATLFKDKMKCTVNNQQSKKIMVAADIVTIFNLIQMNGGAAKEKLPTGRQKVRKKEASFESCRSDTEICNAAECEPLNCELSERSFSRGYPIRQSSKCRKMDCKDCPQFVPASEPNFLLGVSKEVKNRAASLDRLQALAPYSVTSPQPCEMQRTYFPMNIENESISDQDSLPINQSIKETFISNEEPFVVQSCVQKRNIFKEDFHNLMAVSPSLVGPISKAENEHREPQSRKEPHKPPFFNHSFEMPYNSQYLNPVYSPVPDKRRAKHESLDDLQASTYFGPTPVMGTQEARRCLGKPNKQTPWPAKSWSLNTEEVPDFERSFFNRNPSEEKLHYPNASSQTPNFPAPERRPTYLVPKDQQPILPIAYAAKQNGLKSKEISSPVDLEKHEPVKKFKDKSINCTSGQLSSDTSSVGTQTEHVLEPKKCRDLCTSGQGKYSDRHTMKHSDDDSEIVSDDISDIFRFLDDMSISGSTGVIQSSCYNSTGSLSQLHKSDCDSSPEHNLTKIANGVPNSKGDKGNRPENTHHSEEELKTSVCKLVLRIGEIERKLESLSGVRDEISQVLGKLNKLDQKMQQPEKVSVQIDLNSLTSEGPSDDSASPRMFHAHSGSHGPKLENNPDWCCSDASGSNSESLRVKALKKSLFTRPSSRSLTEENSATESKIASISNSPRDWRTITYTNRVGLNEEEIKDTGPGDNKDWHRKSKEADRQYDIPPQHRLPKQPKDGFLVEQVFSPHPYPASLKAHMKSNPLYTDMRLTELAEVKRGQPSWTIEEYARNAGDKGKLTALDLQTQESLNPNNLEYWMEDIYTPGYDSLLKRKEAEFRRAKVCKIAALIAAAACTVILVIVVPICTMKS.

Topologically, residues 1 to 891 (METSQETSLF…AEFRRAKVCK (891 aa)) are cytoplasmic. Disordered regions lie at residues 390–409 (EEKL…PAPE), 553–591 (KSDC…SEEE), 648–675 (SLTS…GPKL), 705–726 (TRPS…IASI), and 745–782 (NEEE…LPKQ). 2 stretches are compositionally biased toward basic and acidic residues: residues 553-564 (KSDCDSSPEHNL) and 575-591 (KGDK…SEEE). S711 bears the Phosphoserine mark. Positions 750–771 (KDTGPGDNKDWHRKSKEADRQY) are enriched in basic and acidic residues. The chain crosses the membrane as a helical span at residues 892–912 (IAALIAAAACTVILVIVVPIC). Over 913 to 916 (TMKS) the chain is Extracellular.

Belongs to the MINAR family. Interacts with NOTCH2; this interaction increases MINAR1 stability. Interacts (via N-terminus) with DEPTOR (via PDZ domain); this interaction may stabilize DEPTOR protein by impairing its ubiquitination. Widely expressed, including in breast epithelial cells and endothelial cells (at protein level). Expression is down-regulated in advanced breast tumors (at protein level).

The protein resides in the cell membrane. Functionally, intrinsically disordered protein which may negatively regulate mTOR signaling pathway by stabilizing the mTOR complex component DEPTOR. Negatively regulates angiogenesis. Negatively regulates cell growth. Negatively regulates neurite outgrowth in hippocampal neurons. The polypeptide is Major intrinsically disordered Notch2-binding receptor 1 (Homo sapiens (Human)).